The primary structure comprises 64 residues: MENTSITIEFSSKFWPYFTLIHMITTIISLLIIISIMTAILNKLCEYNVFHNKTFELPRARVNT.

Residues 6-15 (ITIEFSSKFW) form an interaction with host BCAP31 region. The chain crosses the membrane as a helical span at residues 20 to 40 (LIHMITTIISLLIIISIMTAI). The interaction with small-molecule inhibitor stretch occupies residues 38–43 (TAILNK). Asn52 is a glycosylation site (N-linked (GlcNAc...) asparagine; by host).

Belongs to the orthopneumovirus small hydrophobic protein family. Homopentamer forming a funnel-like pore. Interacts with glycoprotein G; this interaction occurs on the surface of virion particles and infected cells. Interacts with host BCAP31 (via C-terminus); this interaction is direct. Post-translationally, four species of SH have been detected in infected cell cytoplasm: a 7.5 kDa non-glycosylated form (SH0), a 13-15 kDa form that contains one or two N-linked carbohydrate side chains of the high-mannose type (SHg), a 21-30 kDa polylactosaminoglycan-modified form of the protein (SHp), and the isoform generated by alternative translational initiation. Of these different forms, SH0 is by far the most abundant protein detected during virus infection. Tyrosine phosphorylated.

The protein localises to the virion membrane. It is found in the host cell membrane. The protein resides in the host Golgi apparatus membrane. Its subcellular location is the host endoplasmic reticulum membrane. Its activity is regulated as follows. Channel activity is inhibited by copper. Also inhibited by small-molecule pyronin B. Viroporin that forms a homopentameric ion channel displaying low ion selectivity. May play a role in virus morphogenesis and pathogenicity at various stages of the viral life cycle. Accumulates at the membrane of the Golgi apparatus in infected cells and may facilitate virus release by modifying the secretory pathway. May enhance host membrane permeability and disrupt cellular ion homeostasis, which can be sensed as damage-associated molecular patterns/danger signals, triggering NLRP3 inflammasome activation and inflammatory immune response. Also inhibits host TNFA-mediated signaling pathway and may delay apoptosis, allowing time for the virus to replicate. In Homo sapiens (Human), this protein is Small hydrophobic protein (SH).